Here is a 205-residue protein sequence, read N- to C-terminus: Thymidylate kinase (205 aa).

Glycine 13 to serine 20 is a binding site for ATP.

Belongs to the thymidylate kinase family.

The enzyme catalyses dTMP + ATP = dTDP + ADP. Its function is as follows. Phosphorylation of dTMP to form dTDP in both de novo and salvage pathways of dTTP synthesis. The protein is Thymidylate kinase of Leptospira borgpetersenii serovar Hardjo-bovis (strain L550).